A 198-amino-acid chain; its full sequence is Na(+)-translocating NADH-quinone reductase subunit E (198 aa).

The next 6 membrane-spanning stretches (helical) occupy residues 11–31 (AVFVENMALAFFLGMCTFLAV), 35–55 (VSTASGLGVAVTVVLGLAVPI), 77–97 (FLNFITFIGVIAALVQILEMI), 110–130 (GIFLPLIAVNCAIFGGVSFMV), 140–160 (IVYGFGSGIGWMLAIVAMAGI), and 176–196 (LGITFITTGLMALGFMSFSGV).

This sequence belongs to the NqrDE/RnfAE family. Composed of six subunits; NqrA, NqrB, NqrC, NqrD, NqrE and NqrF.

It is found in the cell inner membrane. It catalyses the reaction a ubiquinone + n Na(+)(in) + NADH + H(+) = a ubiquinol + n Na(+)(out) + NAD(+). In terms of biological role, NQR complex catalyzes the reduction of ubiquinone-1 to ubiquinol by two successive reactions, coupled with the transport of Na(+) ions from the cytoplasm to the periplasm. NqrA to NqrE are probably involved in the second step, the conversion of ubisemiquinone to ubiquinol. The polypeptide is Na(+)-translocating NADH-quinone reductase subunit E (Klebsiella pneumoniae subsp. pneumoniae (strain ATCC 700721 / MGH 78578)).